The sequence spans 93 residues: Protein translocase subunit SecE (93 aa).

The disordered stretch occupies residues 1–33 (MTDALGSIDMPDAEDETREKKARKGGKRGKKGP). Residues 20–33 (KKARKGGKRGKKGP) show a composition bias toward basic residues. Residues 64–84 (TVVIVFVVIMIGLVTVIDFGF) traverse the membrane as a helical segment.

This sequence belongs to the SecE/SEC61-gamma family. As to quaternary structure, component of the Sec protein translocase complex. Heterotrimer consisting of SecY, SecE and SecG subunits. The heterotrimers can form oligomers, although 1 heterotrimer is thought to be able to translocate proteins. Interacts with the ribosome. Interacts with SecDF, and other proteins may be involved. Interacts with SecA.

It localises to the cell membrane. Its function is as follows. Essential subunit of the Sec protein translocation channel SecYEG. Clamps together the 2 halves of SecY. May contact the channel plug during translocation. In Streptomyces virginiae (Streptomyces cinnamonensis), this protein is Protein translocase subunit SecE.